The chain runs to 154 residues: Protein X (154 aa).

Positions 68 to 117 (PCALRFTSARRMETTVNAHRNLPKVLHKRTLGLSAMSTTDLEAYFKDCVF) are mitochondrial targeting sequence.

Belongs to the orthohepadnavirus protein X family. May form homodimer. May interact with host CEBPA, CFLAR, CREB1, DDB1, E4F1, HBXIP, HSPD1/HSP60, NFKBIA, POLR2E and SMAD4. Interacts with host SMC5-SMC6 complex and induces its degradation. Interacts with host TRPC4AP; leading to prevent ubiquitination of TRPC4AP. Interacts with host PLSCR1; this interaction promotes ubiquitination and degradation of HBx and impairs HBx-mediated cell proliferation. A fraction may be phosphorylated in insect cells and HepG2 cells, a human hepatoblastoma cell line. Phosphorylated in vitro by host protein kinase C or mitogen-activated protein kinase. N-acetylated in insect cells.

It is found in the host cytoplasm. It localises to the host nucleus. The protein localises to the host mitochondrion. Its function is as follows. Multifunctional protein that plays a role in silencing host antiviral defenses and promoting viral transcription. Does not seem to be essential for HBV infection. May be directly involved in development of cirrhosis and liver cancer (hepatocellular carcinoma). Most of cytosolic activities involve modulation of cytosolic calcium. The effect on apoptosis is controversial depending on the cell types in which the studies have been conducted. May induce apoptosis by localizing in mitochondria and causing loss of mitochondrial membrane potential. May also modulate apoptosis by binding host CFLAR, a key regulator of the death-inducing signaling complex (DISC). Promotes viral transcription by using the host E3 ubiquitin ligase DDB1 to target the SMC5-SMC6 complex to proteasomal degradation. This host complex would otherwise bind to viral episomal DNA, and prevents its transcription. Moderately stimulates transcription of many different viral and cellular transcription elements. Promoters and enhancers stimulated by HBx contain DNA binding sites for NF-kappa-B, AP-1, AP-2, c-EBP, ATF/CREB, or the calcium-activated factor NF-AT. This is Protein X from Hepatitis B virus genotype B1 subtype adw (isolate Japan/pJDW233/1988) (HBV-B).